A 248-amino-acid chain; its full sequence is MWLGVITLFPEMFRAVTDFGVTGRAVKNGLLELHTWNPRDFTHDRHSTVDDRPYGGGPGMLMMVQPLRDAIHAAKAAAGDGAKVIYLSPQGRKLDQHGVTELAKSDSLILVCGRYEGVDERIIQTEVDEEWSIGDYVLSGGELPAMTLIDSVARLVPGVLGKQASAEQDSFSEGLLDCPHYTRPEQLDGMDVPAVLLSGDHEKIRLWRLQQSIGRTFLRRPELFENLALTDEQTTLLAQFVNDTDKSA.

Residues G113 and I133–L138 each bind S-adenosyl-L-methionine.

It belongs to the RNA methyltransferase TrmD family. In terms of assembly, homodimer.

It localises to the cytoplasm. It catalyses the reaction guanosine(37) in tRNA + S-adenosyl-L-methionine = N(1)-methylguanosine(37) in tRNA + S-adenosyl-L-homocysteine + H(+). Its function is as follows. Specifically methylates guanosine-37 in various tRNAs. The sequence is that of tRNA (guanine-N(1)-)-methyltransferase from Shewanella denitrificans (strain OS217 / ATCC BAA-1090 / DSM 15013).